We begin with the raw amino-acid sequence, 877 residues long: Dynamin (877 aa).

Residues 23–289 enclose the Dynamin-type G domain; that stretch reads QLDLPQIAVV…LTNHIRDTLP (267 aa). A G1 motif region spans residues 33–40; sequence GGQSAGKS. 33–41 contacts GTP; that stretch reads GGQSAGKSS. The interval 59–61 is G2 motif; sequence VTR. Residues 131–134 form a G3 motif region; it reads DLPG. Residues 200 to 203 form a G4 motif region; it reads TKLD. GTP contacts are provided by residues 200 to 206 and 231 to 234; these read TKLDLMD and NRSQ. The tract at residues 230-233 is G5 motif; it reads VNRS. Positions 513–621 constitute a PH domain; that stretch reads QVIRKGHMVI…WKASFLRAGV (109 aa). Disordered regions lie at residues 623 to 648 and 740 to 834; these read PEKQETQENGDESASEESSSDPQLER and TVSS…SGAV. Residues 630 to 641 show a composition bias toward acidic residues; that stretch reads ENGDESASEESS. A GED domain is found at 650–741; sequence VETIRNLVDS…IIGDVSMATV (92 aa). Phosphoserine occurs at positions 756, 764, and 767. The span at 788-826 shows a compositional bias: pro residues; sequence PPLPPSTGRPAPAIPNRPGGGAPPLPGGRPGGSLPPPML.

Belongs to the TRAFAC class dynamin-like GTPase superfamily. Dynamin/Fzo/YdjA family.

The protein resides in the cytoplasm. The protein localises to the cytoskeleton. The catalysed reaction is GTP + H2O = GDP + phosphate + H(+). Functionally, microtubule-associated force-producing protein which is involved in the production of microtubule bundles and which is able to bind and hydrolyze GTP. Implicated in endocytic protein sorting. The polypeptide is Dynamin (shi) (Drosophila melanogaster (Fruit fly)).